Reading from the N-terminus, the 186-residue chain is Elongation factor P (186 aa).

This sequence belongs to the elongation factor P family.

It localises to the cytoplasm. It functions in the pathway protein biosynthesis; polypeptide chain elongation. Involved in peptide bond synthesis. Stimulates efficient translation and peptide-bond synthesis on native or reconstituted 70S ribosomes in vitro. Probably functions indirectly by altering the affinity of the ribosome for aminoacyl-tRNA, thus increasing their reactivity as acceptors for peptidyl transferase. This chain is Elongation factor P, found in Neisseria gonorrhoeae (strain ATCC 700825 / FA 1090).